The primary structure comprises 335 residues: Aliphatic sulfonates import ATP-binding protein SsuB (335 aa).

The tract at residues 29–61 (DGDAQDAAVYERDGGAHAPPFASGGAPPDGDRA) is disordered. Residues 74–293 (VRLTRVSKRY…ARASAAFAAL (220 aa)) form the ABC transporter domain. 106–113 (GRSGCGKS) serves as a coordination point for ATP. Residues 308–335 (APAAPNAAGPEGASRGRAAPASGLRWAV) are disordered.

This sequence belongs to the ABC transporter superfamily. Aliphatic sulfonates importer (TC 3.A.1.17.2) family. In terms of assembly, the complex is composed of two ATP-binding proteins (SsuB), two transmembrane proteins (SsuC) and a solute-binding protein (SsuA).

The protein localises to the cell inner membrane. The catalysed reaction is ATP + H2O + aliphatic sulfonate-[sulfonate-binding protein]Side 1 = ADP + phosphate + aliphatic sulfonateSide 2 + [sulfonate-binding protein]Side 1.. Part of the ABC transporter complex SsuABC involved in aliphatic sulfonates import. Responsible for energy coupling to the transport system. The chain is Aliphatic sulfonates import ATP-binding protein SsuB from Burkholderia pseudomallei (strain 1710b).